We begin with the raw amino-acid sequence, 359 residues long: Agropine synthesis conjugase (359 aa).

An SIS domain is found at 28-171; that stretch reads TVAKFGRATA…IGGILNEREN (144 aa).

In Rhizobium rhizogenes (Agrobacterium rhizogenes), this protein is Agropine synthesis conjugase (mas2).